The chain runs to 261 residues: uncharacterized protein (261 aa).

Positions Met1–Gly22 are cleaved as a signal peptide. The N-palmitoyl cysteine moiety is linked to residue Cys23. The S-diacylglycerol cysteine moiety is linked to residue Cys23.

The protein belongs to the staphylococcal tandem lipoprotein family.

Its subcellular location is the cell membrane. This is an uncharacterized protein from Staphylococcus epidermidis (strain ATCC 35984 / DSM 28319 / BCRC 17069 / CCUG 31568 / BM 3577 / RP62A).